Consider the following 214-residue polypeptide: Probable chemoreceptor glutamine deamidase CheD (214 aa).

Belongs to the CheD family.

The enzyme catalyses L-glutaminyl-[protein] + H2O = L-glutamyl-[protein] + NH4(+). Its function is as follows. Probably deamidates glutamine residues to glutamate on methyl-accepting chemotaxis receptors (MCPs), playing an important role in chemotaxis. The sequence is that of Probable chemoreceptor glutamine deamidase CheD from Vibrio vulnificus (strain CMCP6).